A 347-amino-acid polypeptide reads, in one-letter code: Terpene synthase 2 (347 aa).

Residues Asp-103, Asn-247, Ser-251, and Glu-255 each contribute to the Mg(2+) site. Positions 103–107 (DDLLE) match the D(D/E)XX(D/E) motif motif. An NSE motif motif is present at residues 247-255 (NDIFSLKKE). Residues 329 to 336 (WCSKSTRY) carry the WxxxxxRY motif motif.

This sequence belongs to the terpene synthase family. It depends on Mg(2+) as a cofactor.

Its function is as follows. Terpene synthase that may be involved in the production of volatile terpenoids. Does not show detectable terpene products with either farnesyl diphosphate (FPP) or geranyl diphosphate (GPP). P.polycephalum has a unique biology and these volatile terpenoids could function in internal communication of P.polycephalum, to mark the territory that have been explored, or they may be involved in chemotaxis. This chain is Terpene synthase 2, found in Physarum polycephalum (Slime mold).